Reading from the N-terminus, the 334-residue chain is Holliday junction branch migration complex subunit RuvB (334 aa).

Residues 4–184 (ADRLIQPQLQ…FGIPLRLEFY (181 aa)) are large ATPase domain (RuvB-L). ATP contacts are provided by residues Arg-24, Gly-65, Lys-68, Thr-69, Thr-70, 131 to 133 (EDY), Arg-174, Tyr-184, and Arg-221. Thr-69 provides a ligand contact to Mg(2+). Positions 185 to 255 (NIKDLSTIVT…VADHALDLLD (71 aa)) are small ATPAse domain (RuvB-S). The head domain (RuvB-H) stretch occupies residues 258 to 334 (NEGFDYMDRK…YQHFQLIKPE (77 aa)). 3 residues coordinate DNA: Arg-294, Arg-313, and Arg-318.

This sequence belongs to the RuvB family. In terms of assembly, homohexamer. Forms an RuvA(8)-RuvB(12)-Holliday junction (HJ) complex. HJ DNA is sandwiched between 2 RuvA tetramers; dsDNA enters through RuvA and exits via RuvB. An RuvB hexamer assembles on each DNA strand where it exits the tetramer. Each RuvB hexamer is contacted by two RuvA subunits (via domain III) on 2 adjacent RuvB subunits; this complex drives branch migration. In the full resolvosome a probable DNA-RuvA(4)-RuvB(12)-RuvC(2) complex forms which resolves the HJ.

Its subcellular location is the cytoplasm. The enzyme catalyses ATP + H2O = ADP + phosphate + H(+). In terms of biological role, the RuvA-RuvB-RuvC complex processes Holliday junction (HJ) DNA during genetic recombination and DNA repair, while the RuvA-RuvB complex plays an important role in the rescue of blocked DNA replication forks via replication fork reversal (RFR). RuvA specifically binds to HJ cruciform DNA, conferring on it an open structure. The RuvB hexamer acts as an ATP-dependent pump, pulling dsDNA into and through the RuvAB complex. RuvB forms 2 homohexamers on either side of HJ DNA bound by 1 or 2 RuvA tetramers; 4 subunits per hexamer contact DNA at a time. Coordinated motions by a converter formed by DNA-disengaged RuvB subunits stimulates ATP hydrolysis and nucleotide exchange. Immobilization of the converter enables RuvB to convert the ATP-contained energy into a lever motion, pulling 2 nucleotides of DNA out of the RuvA tetramer per ATP hydrolyzed, thus driving DNA branch migration. The RuvB motors rotate together with the DNA substrate, which together with the progressing nucleotide cycle form the mechanistic basis for DNA recombination by continuous HJ branch migration. Branch migration allows RuvC to scan DNA until it finds its consensus sequence, where it cleaves and resolves cruciform DNA. This Shewanella putrefaciens (strain CN-32 / ATCC BAA-453) protein is Holliday junction branch migration complex subunit RuvB.